The following is a 502-amino-acid chain: MFHQAKWDEPTIFELSRPGRIGYTLPKPIEDVDVDIPEKLRRKSPLNLPELSEPEVVKHYTRLSEMNYGVDSGIYPLGSCTMKYNPKINEEIASHPGVAYVHPYQDEGTVQGALKIMWELEQWLKEITGMDRFTLQPAAGANGEFTGVSIIRAYHIDRGETQRTEMLVPDSAHGTNPASAAMAGFKVIEIPSNENGTVDLEALENAVSERTAGLMLTNPNTLGIFEDEILEIAKIVHKAGGLLYYDGANLNAVLGKIRPGDMGFDVVHLNLHKTFSTPHGGGGPGSGPVGVKDFLKDYLPVPLVSYDAENDRYYLDYNVPRSIGKVKELYGNFAVIVRALTYLKIMGREGLKEVSEVAVLNANYLTQKLKGTRGYELPGKELRKHETVFSAEPMKKETGVKALDVAKRLLDFCMHAPTIYFPLIVHEALMIEPTETVSKEELDAYVEALKRISEEAYSNPEVVTSAPHNTAVRRVDDVLAAKKPVITWRMYRELKERGEIDY.

N6-(pyridoxal phosphate)lysine is present on Lys273.

The protein belongs to the GcvP family. C-terminal subunit subfamily. In terms of assembly, the glycine cleavage system is composed of four proteins: P, T, L and H. In this organism, the P 'protein' is a heterodimer of two subunits. Pyridoxal 5'-phosphate is required as a cofactor.

It catalyses the reaction N(6)-[(R)-lipoyl]-L-lysyl-[glycine-cleavage complex H protein] + glycine + H(+) = N(6)-[(R)-S(8)-aminomethyldihydrolipoyl]-L-lysyl-[glycine-cleavage complex H protein] + CO2. The glycine cleavage system catalyzes the degradation of glycine. The P protein binds the alpha-amino group of glycine through its pyridoxal phosphate cofactor; CO(2) is released and the remaining methylamine moiety is then transferred to the lipoamide cofactor of the H protein. This Thermococcus kodakarensis (strain ATCC BAA-918 / JCM 12380 / KOD1) (Pyrococcus kodakaraensis (strain KOD1)) protein is Probable glycine dehydrogenase (decarboxylating) subunit 2.